The following is an 834-amino-acid chain: RNA-binding protein 12B-B (834 aa).

In terms of domain architecture, RRM 1 spans 154-229; sequence PYLFLRGLPY…RFIEVMQGSE (76 aa). The segment at 237–277 is disordered; that stretch reads GTATEGGDTPRMRSEEHSPSRRINGRHFRKRSHSKSPRARS. Basic and acidic residues predominate over residues 244 to 255; sequence DTPRMRSEEHSP. Positions 259–277 are enriched in basic residues; the sequence is INGRHFRKRSHSKSPRARS. RRM domains are found at residues 283 to 359 and 401 to 478; these read FYVH…PVSR and LCIY…LISE. 2 disordered regions span residues 546-572 and 621-643; these read GYFR…PWEE and HFRR…RSRE. The segment covering 550-572 has biased composition (basic and acidic residues); it reads QSDRCSPEDFRHSPEDYRHPWEE. The residue at position 701 (Ser-701) is a Phosphoserine. One can recognise an RRM 4 domain in the interval 758 to 834; it reads IRVMISNLPF…GPRKVKLSLL (77 aa).

This chain is RNA-binding protein 12B-B (Rbm12b2), found in Mus musculus (Mouse).